The primary structure comprises 122 residues: Large ribosomal subunit protein uL14 (122 aa).

Belongs to the universal ribosomal protein uL14 family. As to quaternary structure, part of the 50S ribosomal subunit. Forms a cluster with proteins L3 and L19. In the 70S ribosome, L14 and L19 interact and together make contacts with the 16S rRNA in bridges B5 and B8.

Binds to 23S rRNA. Forms part of two intersubunit bridges in the 70S ribosome. The protein is Large ribosomal subunit protein uL14 of Enterococcus faecalis (strain ATCC 700802 / V583).